Reading from the N-terminus, the 379-residue chain is Protein COS4 (379 aa).

Transmembrane regions (helical) follow at residues 43–63 (IYKS…SVWW), 70–90 (IYPL…VLVI), 233–253 (ISNI…YVSR), and 255–275 (MCLL…VQGF).

It belongs to the DUP/COS family.

It localises to the membrane. The chain is Protein COS4 (COS4) from Saccharomyces cerevisiae (strain ATCC 204508 / S288c) (Baker's yeast).